We begin with the raw amino-acid sequence, 119 residues long: Beta-2-microglobulin (119 aa).

A signal peptide spans 1-20; it reads MACSVVVALLALLSLSGLEA. Residues 25 to 114 form the Ig-like C1-type domain; it reads PKIQVYSRHP…VTFSTPKTVK (90 aa). C45 and C100 form a disulfide bridge.

The protein belongs to the beta-2-microglobulin family. As to quaternary structure, heterodimer of an alpha chain and a beta chain. Beta-2-microglobulin is the beta-chain of major histocompatibility complex class I molecules.

It localises to the secreted. Its function is as follows. Component of the class I major histocompatibility complex (MHC). Involved in the presentation of peptide antigens to the immune system. The polypeptide is Beta-2-microglobulin (B2M) (Mico emiliae (Emilia's marmoset)).